The primary structure comprises 92 residues: Large ribosomal subunit protein eL43 (92 aa).

Residues 39–60 form a C4-type zinc finger; sequence CSFCGKDSMKRAVVGIWSCKRC.

It belongs to the eukaryotic ribosomal protein eL43 family.

This is Large ribosomal subunit protein eL43 (RpL37A) from Drosophila melanogaster (Fruit fly).